The primary structure comprises 273 residues: Glutamate racemase (273 aa).

Substrate is bound by residues 10–11 and 42–43; these read DS and YG. Cys-73 serves as the catalytic Proton donor/acceptor. 74 to 75 contributes to the substrate binding site; sequence NT. The active-site Proton donor/acceptor is the Cys-184. 185–186 is a substrate binding site; it reads TH.

Belongs to the aspartate/glutamate racemases family.

It carries out the reaction L-glutamate = D-glutamate. It participates in cell wall biogenesis; peptidoglycan biosynthesis. Functionally, provides the (R)-glutamate required for cell wall biosynthesis. The polypeptide is Glutamate racemase (Desulforudis audaxviator (strain MP104C)).